Here is a 665-residue protein sequence, read N- to C-terminus: FAD-dependent oxidoreductase domain-containing protein 2 (665 aa).

An N-terminal signal peptide occupies residues 1 to 17; sequence MGPSGLLVALALHLAVC. Asn-136 carries an N-linked (GlcNAc...) asparagine glycan. Positions 642–665 are disordered; it reads RWLGDHSTAPEPLTQSLDSNKEEL. The Prevents secretion from ER motif lies at 662-665; it reads KEEL.

This sequence belongs to the FOXRED2 family. As to quaternary structure, interacts with SEL1L. May interact with OS9 and DNAJC10. Interacts with TXNDC16. FAD is required as a cofactor. Post-translationally, N-glycosylated.

Its subcellular location is the endoplasmic reticulum lumen. Functionally, probable flavoprotein which may function in endoplasmic reticulum associated degradation (ERAD). May bind non-native proteins in the endoplasmic reticulum and target them to the ubiquitination machinery for subsequent degradation. The sequence is that of FAD-dependent oxidoreductase domain-containing protein 2 from Mus musculus (Mouse).